Here is a 334-residue protein sequence, read N- to C-terminus: Nucleoid-associated protein YpsIP31758_2721 (334 aa).

The protein belongs to the YejK family.

Its subcellular location is the cytoplasm. The protein resides in the nucleoid. This is Nucleoid-associated protein YpsIP31758_2721 from Yersinia pseudotuberculosis serotype O:1b (strain IP 31758).